Consider the following 362-residue polypeptide: Solute carrier family 25 member 3 (362 aa).

The transit peptide at 1-49 (MYSSVVHLARANPFNAPHLQLVHDGLAGPRSDPAGPPGPPRRSRNLAAA) directs the protein to the mitochondrion. The Mitochondrial intermembrane segment spans residues 50-63 (AVEEQYSCDYGSGR). Solcar repeat units follow at residues 63 to 147 (RFFI…FKVL), 160 to 244 (WRTS…TVEA), and 261 to 339 (EQLV…VKVY). Residues 64-86 (FFILCGLGGIISCGTTHTALVPL) traverse the membrane as a helical segment. The Mitochondrial matrix portion of the chain corresponds to 87-121 (DLVKCRMQVDPQKYKSIFNGFSVTLKEDGFRGLAK). K99 is subject to N6-acetyllysine. Position 112 is an N6-methyllysine (K112). Residues 122–141 (GWAPTFIGYSLQGLCKFGFY) form a helical membrane-spanning segment. Over 142 to 161 (EVFKVLYSNMLGEENAYLWR) the chain is Mitochondrial intermembrane. The helical transmembrane segment at 162-183 (TSLYLAASASAEFFADIALAPM) threads the bilayer. The Mitochondrial matrix segment spans residues 184–218 (EAAKVRIQTQPGYANTLRDAAPKMYKEEGLKAFYK). At Y196 the chain carries Phosphotyrosine. Position 209 is an N6-acetyllysine (K209). A helical membrane pass occupies residues 219–238 (GVAPLWMRQIPYTMMKFACF). Residues 239 to 261 (ERTVEALYKFVVPKPRSECSKPE) lie on the Mitochondrial intermembrane side of the membrane. A helical membrane pass occupies residues 262–284 (QLVVTFVAGYIAGVFCAIVSHPA). The Mitochondrial matrix segment spans residues 285–314 (DSVVSVLNKEKGSSASEVLKRLGFRGVWKG). The helical transmembrane segment at 315-333 (LFARIIMIGTLTALQWFIY) threads the bilayer. Topologically, residues 334–362 (DSVKVYFRLPRPPPPEMPESLKKKLGYTQ) are mitochondrial intermembrane.

This sequence belongs to the mitochondrial carrier (TC 2.A.29) family. As to quaternary structure, interacts with PPIF; the interaction is impaired by CsA. In terms of tissue distribution, expressed in heart, diaphragm and skeletal muscle (at protein level). Not detected in liver, lung, brain, and kidney (at protein level). Ubiquitous (at protein level).

It is found in the mitochondrion inner membrane. The catalysed reaction is phosphate(in) + H(+)(in) = phosphate(out) + H(+)(out). Its activity is regulated as follows. Up-regulated in the presence of cardiolipin. In terms of biological role, inorganic ion transporter that transports phosphate or copper ions across the mitochondrial inner membrane into the matrix compartment. Mediates proton-coupled symport of phosphate ions necessary for mitochondrial oxidative phosphorylation of ADP to ATP. Transports copper ions probably in the form of anionic copper(I) complexes to maintain mitochondrial matrix copper pool and to supply copper for cytochrome C oxidase complex assembly. May also play a role in regulation of the mitochondrial permeability transition pore (mPTP). The sequence is that of Solute carrier family 25 member 3 from Bos taurus (Bovine).